The primary structure comprises 179 residues: Large ribosomal subunit protein uL6 (179 aa).

It belongs to the universal ribosomal protein uL6 family. In terms of assembly, part of the 50S ribosomal subunit.

In terms of biological role, this protein binds to the 23S rRNA, and is important in its secondary structure. It is located near the subunit interface in the base of the L7/L12 stalk, and near the tRNA binding site of the peptidyltransferase center. The chain is Large ribosomal subunit protein uL6 from Gloeothece citriformis (strain PCC 7424) (Cyanothece sp. (strain PCC 7424)).